The following is a 137-amino-acid chain: DNA-binding protein H-NS (137 aa).

Residues 112–117 mediate DNA binding; that stretch reads QGRTPA.

This sequence belongs to the histone-like protein H-NS family. Homodimer that oligomerizes on DNA into higher-order complexes that form bridges between disparate regions of DNA compacting it. Interacts with Hha, Cnu and StpA.

It localises to the cytoplasm. It is found in the nucleoid. Its function is as follows. A DNA-binding protein implicated in transcriptional repression and chromosome organization and compaction. Binds nucleation sites in AT-rich DNA and bridges them, forming higher-order nucleoprotein complexes and condensing the chromosome. As many horizontally transferred genes are AT-rich, it plays a central role in silencing foreign genes. A subset of genes are repressed by H-NS in association with other proteins. In Escherichia coli O6:H1 (strain CFT073 / ATCC 700928 / UPEC), this protein is DNA-binding protein H-NS (hns).